A 44-amino-acid chain; its full sequence is KKVYSFLKLKGCLPRNRFCNALSGPRCCSGLRCKELSIWASKCL.

The propeptide occupies 1 to 9; it reads KKVYSFLKL. 3 disulfide bridges follow: C12–C28, C19–C33, and C27–C43.

The protein belongs to the neurotoxin 01 (U2-agtx) family. In terms of tissue distribution, expressed by the venom gland.

It localises to the secreted. Functionally, insect active toxin causing rapid but reversible paralysis in crickets. No activity shown in mammals. Does not show effect on mammalian voltage-gated calcium channels. The polypeptide is U2-agatoxin-Ao1s (Agelena orientalis (Funnel-web spider)).